Here is a 507-residue protein sequence, read N- to C-terminus: Glucose-6-phosphate 1-dehydrogenase (507 aa).

Arg-57 and Lys-168 together coordinate NADP(+). Positions 198, 202, 236, and 255 each coordinate substrate. The active-site Proton acceptor is His-260. Lys-356 is a binding site for substrate.

Belongs to the glucose-6-phosphate dehydrogenase family.

The enzyme catalyses D-glucose 6-phosphate + NADP(+) = 6-phospho-D-glucono-1,5-lactone + NADPH + H(+). The protein operates within carbohydrate degradation; pentose phosphate pathway; D-ribulose 5-phosphate from D-glucose 6-phosphate (oxidative stage): step 1/3. Catalyzes the oxidation of glucose 6-phosphate to 6-phosphogluconolactone. The chain is Glucose-6-phosphate 1-dehydrogenase from Chlamydia muridarum (strain MoPn / Nigg).